The primary structure comprises 606 residues: R-linalool synthase, chloroplastic (606 aa).

The transit peptide at 1–51 (MCTIISVNHHHVAILSKPKVKLFHTKNKRSASINLPWSLSPSSSAASRPIS) directs the protein to the chloroplast. The (2E)-geranyl diphosphate site is built by Arg326, Asp363, Asp367, Arg504, and Asp507. 2 residues coordinate Mg(2+): Asp363 and Asp367. A DDXXD motif motif is present at residues 363–367 (DDVYD). Mg(2+) contacts are provided by Asp507, Thr511, and Glu515.

The protein belongs to the terpene synthase family. Tpsb subfamily. Mg(2+) is required as a cofactor. It depends on Mn(2+) as a cofactor.

It localises to the plastid. It is found in the chloroplast. It carries out the reaction (2E)-geranyl diphosphate + H2O = (R)-linalool + diphosphate. It participates in secondary metabolite biosynthesis; terpenoid biosynthesis. Monoterpene synthase that catalyzes the formation of (3R)-linalool from geranyl diphosphate, but not from farnesyl diphosphate or geranylgeranyl diphosphate. The polypeptide is R-linalool synthase, chloroplastic (Mentha aquatica (Water mint)).